We begin with the raw amino-acid sequence, 100 residues long: MAKKSMIARDVKRKKMVERFAAKRSALMEAFANAADPMERLEIHRKIQQLPRNSAPTRMRNRCWATGKPRGVYRDFGLCRNQLRERAHKGLLPGVVKSSW.

This sequence belongs to the universal ribosomal protein uS14 family. In terms of assembly, part of the 30S ribosomal subunit. Contacts proteins S3 and S10.

Binds 16S rRNA, required for the assembly of 30S particles and may also be responsible for determining the conformation of the 16S rRNA at the A site. The protein is Small ribosomal subunit protein uS14 of Synechococcus sp. (strain RCC307).